Here is a 198-residue protein sequence, read N- to C-terminus: tRNA(Phe) 7-((3-amino-3-carboxypropyl)-4-demethylwyosine(37)-N(4))-methyltransferase 1 (198 aa).

The protein belongs to the TYW3 family.

The enzyme catalyses 4-demethyl-7-[(3S)-3-amino-3-carboxypropyl]wyosine(37) in tRNA(Phe) + S-adenosyl-L-methionine = 7-[(3S)-3-amino-3-carboxypropyl]wyosine(37) in tRNA(Phe) + S-adenosyl-L-homocysteine + H(+). S-adenosyl-L-methionine-dependent methyltransferase that acts as a component of the wyosine derivatives biosynthesis pathway. Probably methylates N-4 position of wybutosine-86 to produce wybutosine-72. In Thermococcus kodakarensis (strain ATCC BAA-918 / JCM 12380 / KOD1) (Pyrococcus kodakaraensis (strain KOD1)), this protein is tRNA(Phe) 7-((3-amino-3-carboxypropyl)-4-demethylwyosine(37)-N(4))-methyltransferase 1.